The primary structure comprises 326 residues: tRNA-dihydrouridine(20/20a) synthase (326 aa).

FMN is bound by residues 11–13 and Gln63; that span reads PML. The active-site Proton donor is Cys93. Residues Lys132, His165, 205-207, and 227-228 contribute to the FMN site; these read NGG and GR.

The protein belongs to the Dus family. DusA subfamily. FMN is required as a cofactor.

The catalysed reaction is 5,6-dihydrouridine(20) in tRNA + NADP(+) = uridine(20) in tRNA + NADPH + H(+). It catalyses the reaction 5,6-dihydrouridine(20) in tRNA + NAD(+) = uridine(20) in tRNA + NADH + H(+). It carries out the reaction 5,6-dihydrouridine(20a) in tRNA + NADP(+) = uridine(20a) in tRNA + NADPH + H(+). The enzyme catalyses 5,6-dihydrouridine(20a) in tRNA + NAD(+) = uridine(20a) in tRNA + NADH + H(+). Functionally, catalyzes the synthesis of 5,6-dihydrouridine (D), a modified base found in the D-loop of most tRNAs, via the reduction of the C5-C6 double bond in target uridines. Specifically modifies U20 and U20a in tRNAs. This chain is tRNA-dihydrouridine(20/20a) synthase, found in Vibrio parahaemolyticus serotype O3:K6 (strain RIMD 2210633).